The sequence spans 152 residues: Transcription elongation factor Spt5 (152 aa).

Positions Glu98 to Val127 constitute a KOW domain.

The protein belongs to the archaeal Spt5 family. As to quaternary structure, heterodimer composed of Spt4 and Spt5. Interacts with RNA polymerase (RNAP).

Stimulates transcription elongation. The chain is Transcription elongation factor Spt5 from Acidianus ambivalens (Desulfurolobus ambivalens).